The primary structure comprises 166 residues: Probable RNA-binding protein EIF1AD (166 aa).

Residues 5–89 (TKRKHVVKEV…VKAEISFVLC (85 aa)) form the S1-like domain. The Nuclear localization signal motif lies at 6–12 (KRKHVVK). A Phosphothreonine modification is found at threonine 33. The Nuclear localization signal signature appears at 56-65 (KYRKNIWIKR). The segment at 114–166 (NNNRNRQTQPELPAEPQLSGEESSSEDDSDLFVNTNRRQYRESEEESEEEEAA) is disordered. Phosphoserine is present on residues serine 132, serine 136, serine 137, serine 138, serine 156, and serine 160. Over residues 156–166 (SEEESEEEEAA) the composition is skewed to acidic residues.

This sequence belongs to the EIF1AD family. Interacts with GAPDH and STAT1.

Its subcellular location is the nucleus. Plays a role into cellular response to oxidative stress. Decreases cell proliferation. This Pongo abelii (Sumatran orangutan) protein is Probable RNA-binding protein EIF1AD (EIF1AD).